The chain runs to 227 residues: Ribosomal RNA small subunit methyltransferase G (227 aa).

Residues Gly-74, Leu-79, 124-125 (AE), and Arg-142 each bind S-adenosyl-L-methionine.

It belongs to the methyltransferase superfamily. RNA methyltransferase RsmG family.

The protein resides in the cytoplasm. Specifically methylates the N7 position of guanine in position 518 of 16S rRNA. The polypeptide is Ribosomal RNA small subunit methyltransferase G (Mycolicibacterium gilvum (strain PYR-GCK) (Mycobacterium gilvum (strain PYR-GCK))).